The chain runs to 507 residues: ATP synthase subunit alpha, chloroplastic (507 aa).

An ATP-binding site is contributed by 170–177 (GDRQTGKT).

It belongs to the ATPase alpha/beta chains family. As to quaternary structure, F-type ATPases have 2 components, CF(1) - the catalytic core - and CF(0) - the membrane proton channel. CF(1) has five subunits: alpha(3), beta(3), gamma(1), delta(1), epsilon(1). CF(0) has four main subunits: a, b, b' and c.

The protein localises to the plastid. Its subcellular location is the chloroplast thylakoid membrane. The catalysed reaction is ATP + H2O + 4 H(+)(in) = ADP + phosphate + 5 H(+)(out). Functionally, produces ATP from ADP in the presence of a proton gradient across the membrane. The alpha chain is a regulatory subunit. In Vitis vinifera (Grape), this protein is ATP synthase subunit alpha, chloroplastic.